The sequence spans 190 residues: Protein GrpE (190 aa).

Residues 1–33 are disordered; that stretch reads MSEQEKDQNNAEPQVETVEEQQAAAAAEAVEPT. Residues 11–32 are compositionally biased toward low complexity; that stretch reads AEPQVETVEEQQAAAAAEAVEP.

It belongs to the GrpE family. Homodimer.

The protein localises to the cytoplasm. Functionally, participates actively in the response to hyperosmotic and heat shock by preventing the aggregation of stress-denatured proteins, in association with DnaK and GrpE. It is the nucleotide exchange factor for DnaK and may function as a thermosensor. Unfolded proteins bind initially to DnaJ; upon interaction with the DnaJ-bound protein, DnaK hydrolyzes its bound ATP, resulting in the formation of a stable complex. GrpE releases ADP from DnaK; ATP binding to DnaK triggers the release of the substrate protein, thus completing the reaction cycle. Several rounds of ATP-dependent interactions between DnaJ, DnaK and GrpE are required for fully efficient folding. This Alcanivorax borkumensis (strain ATCC 700651 / DSM 11573 / NCIMB 13689 / SK2) protein is Protein GrpE.